We begin with the raw amino-acid sequence, 376 residues long: RNA binding protein fox-1 homolog 1 (376 aa).

A disordered region spans residues 1–126 (MEEKGSRMVQ…QPKRLHVSNI (126 aa)). Positions 72-89 (QTHSEQSPADTNAQTVSG) are enriched in polar residues. The segment covering 90–101 (TATQTDDAAPTD) has biased composition (low complexity). The span at 102 to 115 (GQPQTQPSENTENK) shows a compositional bias: polar residues. The RRM domain maps to 119–195 (KRLHVSNIPF…RKIEVNNATA (77 aa)). R319 carries the post-translational modification Asymmetric dimethylarginine.

Binds to the C-terminus of ATXN2.

The protein localises to the nucleus. The protein resides in the cytoplasm. Its function is as follows. RNA-binding protein that regulates alternative splicing events by binding to 5'-UGCAUGU-3' elements. Prevents binding of U2AF2 to the 3'-splice site. Regulates alternative splicing of tissue-specific exons and of differentially spliced exons during erythropoiesis. This Macaca fascicularis (Crab-eating macaque) protein is RNA binding protein fox-1 homolog 1 (RBFOX1).